The sequence spans 138 residues: MGWSYIILFLVATATDVHSQVQLQQPGAELVKPGASVQLSCKASGHTFTNYWIHWVKQRPGQGLEWIGEINPNDGRSNYNEKFKNKATLTVDKSSSTAYMQLSSLTPEEFAVYYCARSDGYYDWFVYWGQGTLVTFSA.

Residues 1–20 (MGWSYIILFLVATATDVHSQ) form the signal peptide. Positions 21–49 (VQLQQPGAELVKPGASVQLSCKASGHTFT) are framework-1. Residues cysteine 41 and cysteine 115 are joined by a disulfide bond. A complementarity-determining-1 region spans residues 50-54 (NYWIH). Residues 55–68 (WVKQRPGQGLEWIG) form a framework-2 region. The tract at residues 69–85 (EINPNDGRSNYNEKFKN) is complementarity-determining-2. Residues 86–117 (KATLTVDKSSSTAYMQLSSLTPEEFAVYYCAR) form a framework-3 region. A complementarity-determining-3 region spans residues 118–127 (SDGYYDWFVY). A framework-4 region spans residues 128-138 (WGQGTLVTFSA).

This is Ig heavy chain V region TEPC 1017 from Mus musculus (Mouse).